Consider the following 187-residue polypeptide: Cytokinin riboside 5'-monophosphate phosphoribohydrolase (187 aa).

Residue K74 forms an Isoglutamyl lysine isopeptide (Lys-Gln) (interchain with Q-Cter in protein Pup) linkage. Residues E80, 98–99 (RK), 115–121 (GVGTLDE), and T127 each bind substrate.

The protein belongs to the LOG family. In terms of assembly, homodimer. Pupylated at Lys-74 by the prokaryotic ubiquitin-like protein Pup, which leads to its degradation by the proteasome. The proteasomal control of cytokinin synthesis is essential to protect M.tuberculosis against host-produced NO.

The enzyme catalyses N(6)-(dimethylallyl)adenosine 5'-phosphate + H2O = N(6)-dimethylallyladenine + D-ribose 5-phosphate. It carries out the reaction 9-ribosyl-trans-zeatin 5'-phosphate + H2O = trans-zeatin + D-ribose 5-phosphate. In terms of biological role, catalyzes the hydrolytic removal of ribose 5'-monophosphate from nitrogen N6-modified adenosines, the final step of bioactive cytokinin synthesis. Is involved in the synthesis of isopentenyladenine (iP) and 2-methylthio-iP (2MeS-iP), the most abundant cytokinins detected in M.tuberculosis lysates and supernatants. Is also able to convert trans-zeatin-riboside monophosphate (tZRMP) to trans-zeatin (tZ) in vitro; however, it may not be involved in the biosynthesis of this minor cytokinin in vivo. Accumulation of Rv1205 sensitizes M.tuberculosis to nitric oxide since cytokinin breakdown products synergize with NO to kill M.tuberculosis. Shows a slow AMP hydrolase activity, but is not able to hydrolyze ATP. Displays no lysine decarboxylase (LDC) activity (L-lysine conversion to cadaverine). This Mycobacterium tuberculosis (strain ATCC 25618 / H37Rv) protein is Cytokinin riboside 5'-monophosphate phosphoribohydrolase.